The chain runs to 156 residues: Small ribosomal subunit protein eS19A (156 aa).

The protein belongs to the eukaryotic ribosomal protein eS19 family.

The chain is Small ribosomal subunit protein eS19A (RpS19a) from Drosophila melanogaster (Fruit fly).